Reading from the N-terminus, the 185-residue chain is Ribosome-recycling factor (185 aa).

Belongs to the RRF family.

It is found in the cytoplasm. Its function is as follows. Responsible for the release of ribosomes from messenger RNA at the termination of protein biosynthesis. May increase the efficiency of translation by recycling ribosomes from one round of translation to another. This chain is Ribosome-recycling factor, found in Mycobacterium avium (strain 104).